A 285-amino-acid chain; its full sequence is Phosphate import ATP-binding protein PstB (285 aa).

Residues 39–280 (LEVSDLQLWY…PAKKQTEDYI (242 aa)) enclose the ABC transporter domain. An ATP-binding site is contributed by 71–78 (GPSGCGKS).

The protein belongs to the ABC transporter superfamily. Phosphate importer (TC 3.A.1.7) family. In terms of assembly, the complex is composed of two ATP-binding proteins (PstB), two transmembrane proteins (PstC and PstA) and a solute-binding protein (PstS).

Its subcellular location is the cell inner membrane. It carries out the reaction phosphate(out) + ATP + H2O = ADP + 2 phosphate(in) + H(+). In terms of biological role, part of the ABC transporter complex PstSACB involved in phosphate import. Responsible for energy coupling to the transport system. The polypeptide is Phosphate import ATP-binding protein PstB (Alkalilimnicola ehrlichii (strain ATCC BAA-1101 / DSM 17681 / MLHE-1)).